The following is a 152-amino-acid chain: Aspartate 1-decarboxylase (152 aa).

The Schiff-base intermediate with substrate; via pyruvic acid role is filled by Ser24. Ser24 bears the Pyruvic acid (Ser) mark. Thr56 contacts substrate. Residue Tyr57 is the Proton donor of the active site. 72–74 (GAA) contacts substrate.

It belongs to the PanD family. As to quaternary structure, heterooctamer of four alpha and four beta subunits. Requires pyruvate as cofactor. In terms of processing, is synthesized initially as an inactive proenzyme, which is activated by self-cleavage at a specific serine bond to produce a beta-subunit with a hydroxyl group at its C-terminus and an alpha-subunit with a pyruvoyl group at its N-terminus.

It is found in the cytoplasm. The catalysed reaction is L-aspartate + H(+) = beta-alanine + CO2. The protein operates within cofactor biosynthesis; (R)-pantothenate biosynthesis; beta-alanine from L-aspartate: step 1/1. Its function is as follows. Catalyzes the pyruvoyl-dependent decarboxylation of aspartate to produce beta-alanine. This Methylobacterium nodulans (strain LMG 21967 / CNCM I-2342 / ORS 2060) protein is Aspartate 1-decarboxylase.